A 523-amino-acid chain; its full sequence is Putative pentatricopeptide repeat-containing protein At3g15200 (523 aa).

PPR repeat units lie at residues 142–172, 177–211, 212–242, 246–280, 281–315, 316–350, 351–385, 388–418, 420–454, and 455–489; these read SSML…MSKR, NEKT…GIDD, DLVA…RRRE, DIKA…KCRP, DVVS…RRNP, DVKI…GPDP, NVVT…GGSC, NDVT…NKCE, TSDL…GLGP, and DQRT…GMVP. Residues 497-523 form a disordered region; the sequence is LNQNKTKPRVEDKMLRSNLTSEESESD.

Belongs to the PPR family. P subfamily.

The sequence is that of Putative pentatricopeptide repeat-containing protein At3g15200 from Arabidopsis thaliana (Mouse-ear cress).